The chain runs to 182 residues: Small ribosomal subunit protein uS5 (182 aa).

In terms of domain architecture, S5 DRBM spans 16-79; it reads FVDRLVHINR…ESAKRGMIYV (64 aa).

This sequence belongs to the universal ribosomal protein uS5 family. As to quaternary structure, part of the 30S ribosomal subunit. Contacts proteins S4 and S8.

With S4 and S12 plays an important role in translational accuracy. Its function is as follows. Located at the back of the 30S subunit body where it stabilizes the conformation of the head with respect to the body. This is Small ribosomal subunit protein uS5 from Bartonella tribocorum (strain CIP 105476 / IBS 506).